A 273-amino-acid chain; its full sequence is Putative pyruvate, phosphate dikinase regulatory protein (273 aa).

153-160 (GVSRTSKT) contributes to the ADP binding site.

The protein belongs to the pyruvate, phosphate/water dikinase regulatory protein family. PDRP subfamily.

The enzyme catalyses N(tele)-phospho-L-histidyl/L-threonyl-[pyruvate, phosphate dikinase] + ADP = N(tele)-phospho-L-histidyl/O-phospho-L-threonyl-[pyruvate, phosphate dikinase] + AMP + H(+). It carries out the reaction N(tele)-phospho-L-histidyl/O-phospho-L-threonyl-[pyruvate, phosphate dikinase] + phosphate + H(+) = N(tele)-phospho-L-histidyl/L-threonyl-[pyruvate, phosphate dikinase] + diphosphate. Functionally, bifunctional serine/threonine kinase and phosphorylase involved in the regulation of the pyruvate, phosphate dikinase (PPDK) by catalyzing its phosphorylation/dephosphorylation. This Sinorhizobium medicae (strain WSM419) (Ensifer medicae) protein is Putative pyruvate, phosphate dikinase regulatory protein.